A 304-amino-acid polypeptide reads, in one-letter code: Pseudouridine-5'-phosphate glycosidase (304 aa).

The active-site Proton donor is Glu25. Residues Lys86 and Val106 each coordinate substrate. Asp138 is a binding site for Mn(2+). 140–142 (SAD) is a binding site for substrate. The active-site Nucleophile is the Lys159.

It belongs to the pseudouridine-5'-phosphate glycosidase family. Homotrimer. Requires Mn(2+) as cofactor.

The enzyme catalyses D-ribose 5-phosphate + uracil = psi-UMP + H2O. Functionally, catalyzes the reversible cleavage of pseudouridine 5'-phosphate (PsiMP) to ribose 5-phosphate and uracil. Functions biologically in the cleavage direction, as part of a pseudouridine degradation pathway. The protein is Pseudouridine-5'-phosphate glycosidase of Lysinibacillus sphaericus (strain C3-41).